We begin with the raw amino-acid sequence, 45 residues long: uncharacterized protein (45 aa).

The chain crosses the membrane as a helical span at residues 10-27 (LLYFVLFVDIYGIFTNNI).

It localises to the membrane. This is an uncharacterized protein from Dictyostelium discoideum (Social amoeba).